The chain runs to 160 residues: MGQKFHKLNSKYGIIDYPILLKDLESIIQEFPKSERKFYEYAIKALKKEVGKKEKILHMTSADPKLTKFGFMVITEKKLLFVTMKGGFFGGADTEVVEFKSIKEVDFDIAPNPLGMATMQLGILHLKIKGKLGMSSKRTIRNIDEHSLDKIVAILREQTK.

This chain is SPbeta prophage-derived uncharacterized protein YokE (yokE), found in Bacillus subtilis (strain 168).